The sequence spans 335 residues: Succinylglutamate desuccinylase (335 aa).

Positions 59, 62, and 151 each coordinate Zn(2+). The active site involves E215.

It belongs to the AspA/AstE family. Succinylglutamate desuccinylase subfamily. The cofactor is Zn(2+).

The enzyme catalyses N-succinyl-L-glutamate + H2O = L-glutamate + succinate. It participates in amino-acid degradation; L-arginine degradation via AST pathway; L-glutamate and succinate from L-arginine: step 5/5. Functionally, transforms N(2)-succinylglutamate into succinate and glutamate. The chain is Succinylglutamate desuccinylase from Pseudomonas putida (strain ATCC 47054 / DSM 6125 / CFBP 8728 / NCIMB 11950 / KT2440).